A 213-amino-acid chain; its full sequence is 3-isopropylmalate dehydratase small subunit (213 aa).

This sequence belongs to the LeuD family. LeuD type 1 subfamily. In terms of assembly, heterodimer of LeuC and LeuD.

The enzyme catalyses (2R,3S)-3-isopropylmalate = (2S)-2-isopropylmalate. The protein operates within amino-acid biosynthesis; L-leucine biosynthesis; L-leucine from 3-methyl-2-oxobutanoate: step 2/4. In terms of biological role, catalyzes the isomerization between 2-isopropylmalate and 3-isopropylmalate, via the formation of 2-isopropylmaleate. The protein is 3-isopropylmalate dehydratase small subunit of Pseudomonas syringae pv. tomato (strain ATCC BAA-871 / DC3000).